The following is a 163-amino-acid chain: NADH-quinone oxidoreductase subunit I (163 aa).

4Fe-4S ferredoxin-type domains follow at residues 53–83 (LRRY…IEAG) and 94–123 (VRYD…EGPN). Positions 63, 66, 69, 73, 103, 106, 109, and 113 each coordinate [4Fe-4S] cluster.

It belongs to the complex I 23 kDa subunit family. NDH-1 is composed of 14 different subunits. Subunits NuoA, H, J, K, L, M, N constitute the membrane sector of the complex. [4Fe-4S] cluster is required as a cofactor.

The protein localises to the cell inner membrane. The catalysed reaction is a quinone + NADH + 5 H(+)(in) = a quinol + NAD(+) + 4 H(+)(out). NDH-1 shuttles electrons from NADH, via FMN and iron-sulfur (Fe-S) centers, to quinones in the respiratory chain. The immediate electron acceptor for the enzyme in this species is believed to be ubiquinone. Couples the redox reaction to proton translocation (for every two electrons transferred, four hydrogen ions are translocated across the cytoplasmic membrane), and thus conserves the redox energy in a proton gradient. The protein is NADH-quinone oxidoreductase subunit I of Bartonella tribocorum (strain CIP 105476 / IBS 506).